Here is a 193-residue protein sequence, read N- to C-terminus: CASP-like protein 2D1 (193 aa).

The disordered stretch occupies residues 1-24 (MRANNNNTREEERSSSSKQQQPQA). Residues 1 to 29 (MRANNNNTREEERSSSSKQQQPQAHMSLK) are Cytoplasmic-facing. A helical membrane pass occupies residues 30 to 50 (IIDSCLRLSVVPLSVATIWLT). At 51–73 (VTNHESNPDYGNLDYNSIMGLKY) the chain is on the extracellular side. A helical membrane pass occupies residues 74–94 (MVGVSAISAIYALLSTISLWV). Residues 95-109 (TCLVSKAWLFFVPDQ) are Cytoplasmic-facing. The helical transmembrane segment at 110-132 (VLAYVMTTSVAGATEIVYLLNKG) threads the bilayer. The Extracellular portion of the chain corresponds to 133 to 151 (DKIVTWSEMCSSYPHYCSK). The helical transmembrane segment at 152–172 (LTIALGLHVFVLFFFLFLSVI) threads the bilayer. Residues 173-193 (SAYRAFSPFDPPCDSQTNIDA) are Cytoplasmic-facing.

Belongs to the Casparian strip membrane proteins (CASP) family. In terms of assembly, homodimer and heterodimers.

It is found in the cell membrane. The polypeptide is CASP-like protein 2D1 (Arabidopsis lyrata subsp. lyrata (Lyre-leaved rock-cress)).